The primary structure comprises 139 residues: Plastocyanin (139 aa).

An N-terminal signal peptide occupies residues 1 to 34; sequence MKLIAQISRSLSLALFALVLMVGSFVAVMSPAAA. Residues 35-139 form the Plastocyanin-like domain; sequence ETFTVKMGAD…GMVGKITVEG (105 aa). Histidine 73, cysteine 123, histidine 126, and methionine 131 together coordinate Cu cation.

Belongs to the plastocyanin family. Cu(2+) serves as cofactor.

Its subcellular location is the cellular thylakoid membrane. Functionally, participates in electron transfer between P700 and the cytochrome b6-f complex in photosystem I. The protein is Plastocyanin (petE) of Leptolyngbya laminosa (Phormidium laminosum).